Here is a 533-residue protein sequence, read N- to C-terminus: Protein disulfide isomerase-like 1-5 (533 aa).

The N-terminal stretch at 1–22 (MRARRVVAAAAVLLLFAVVAVA) is a signal peptide. 2 consecutive Thioredoxin domains span residues 51-196 (LGGG…KDQT) and 387-516 (LLEG…EKLQ). Catalysis depends on C97, which acts as the Nucleophile. N151 is a glycosylation site (N-linked (GlcNAc...) asparagine). Active-site nucleophile residues include C436 and C439. A disulfide bridge links C436 with C439. The Prevents secretion from ER motif lies at 530–533 (KDEL).

This sequence belongs to the protein disulfide isomerase family.

The protein resides in the endoplasmic reticulum lumen. It carries out the reaction Catalyzes the rearrangement of -S-S- bonds in proteins.. Its function is as follows. Acts as a protein-folding catalyst that interacts with nascent polypeptides to catalyze the formation, isomerization, and reduction or oxidation of disulfide bonds. May play a role in storage protein biogenesis. In Oryza sativa subsp. japonica (Rice), this protein is Protein disulfide isomerase-like 1-5 (PDIL1-5).